Here is a 1324-residue protein sequence, read N- to C-terminus: MLFVFILFLPSCLGYIGDFRCIQLVNSNGANVSAPSISTETVEVSQGLGTYYVLDRVYLNATLLLTGYYPVDGSKFRNLALRGTNSVSLSWFQPPYLNQFNDGIFAKVQNLKTSTPSGATAYFPTIVIGSLFGYTSYTVVIEPYNGVIMASVCQYTICQLPYTDCKPNTNGNKLIGFWHTDVKPPICVLKRNFTLNVNADAFYFHFYQHGGTFYAYYADKPSATTFLFSVYIGDILTQYYVLPFICNPTAGSTFAPRYWVTPLVKRQYLFNFNQKGVITSAVDCASSYTSEIKCKTQSMLPSTGVYELSGYTVQPVGVVYRRVANLPACNIEEWLTARSVPSPLNWERKTFQNCNFNLSSLLRYVQAESLFCNNIDASKVYGRCFGSISVDKFAVPRSRQVDLQLGNSGFLQTANYKIDTAATSCQLHYTLPKNNVTINNHNPSSWNRRYGFNDAGVFGKNQHDVVYAQQCFTVRSSYCPCAQPDIVSPCTTQTKPKSAFVNVGDHCEGLGVLEDNCGNADPHKGCICANNSFIGWSHDTCLVNDRCQIFANILLNGINSGTTCSTDLQLPNTEVVTGICVKYDLYGITGQGVFKEVKADYYNSWQTLLYDVNGNLNGFRDLTTNKTYTIRSCYSGRVSAAFHKDAPEPALLYRNINCSYVFSNNISREENPLNYFDSYLGCVVNADNRTDEALPNCDLRMGAGLCVDYSKSRRAHRSVSTGYRLTTFEPYTPMLVNDSVQSVDGLYEMQIPTNFTIGHHEEFIQTRSPKVTIDCAAFVCGDNTACRQQLVEYGSFCVNVNAILNEVNNLLDNMQLQVASALMQGVTISSRLPDGISGPIDDINFSPLLGCIGSTCAEDGNGPSAIRGRSAIEDLLFDKVKLSDVGFVEAYNNCTGGQEVRDLLCVQSFNGIKVLPPVLSESQISGYTTGATAAAMFPPWSAAAGVPFSLSVQYRINGLGVTMNVLSENQKMIASAFNNALGAIQDGFDATNSALGKIQSVVNANAEALNNLLNQLSNRFGAISASLQEILTRLEAVEAKAQIDRLINGRLTALNAYISKQLSDSTLIKVSAAQAIEKVNECVKSQTTRINFCGNGNHILSLVQNAPYGLYFIHFSYVPISFTTANVSPGLCISGDRGLAPKAGYFVQDDGEWKFTGSSYYYPEPITDKNSVIMSSCAVNYTKAPEVFLNTSIPNPPDFKEELDKWFKNQTSIAPDLSLDFEKLNVTLLDLTYEMNRIQDAIKKLNESYINLKEVGTYEMYVKWPWYVWLLIGLAGVAVCVLLFFICCCTGCGSCCFKKCGNCCDEYGGHQDSIVIHNISSHED.

The first 13 residues, Met1–Leu13, serve as a signal peptide directing secretion. The Extracellular portion of the chain corresponds to Gly14–Pro1265. The region spanning Tyr15 to Thr296 is the BetaCoV S1-NTD domain. Residues Gly17–Asn330 form a receptor binding site region. 5 cysteine pairs are disulfide-bonded: Cys21/Cys158, Cys153/Cys187, Cys165/Cys246, Cys284/Cys294, and Cys329/Cys354. N-linked (GlcNAc...) asparagine; by host glycosylation is found at Asn31 and Asn60. Residue Asn192 is glycosylated (N-linked (GlcNAc...) asparagine; by host). Positions Pro327–Thr566 constitute a BetaCoV S1-CTD domain. Asn357 carries N-linked (GlcNAc...) asparagine; by host glycosylation. 2 disulfide bridges follow: Cys372–Cys425 and Cys384–Cys564. N-linked (GlcNAc...) asparagine; by host glycosylation is found at Asn435, Asn530, Asn625, Asn657, Asn665, Asn688, Asn737, and Asn754. 2 fusion peptide regions span residues Ser870–Tyr891 and Glu889–Phe909. The N-linked (GlcNAc...) asparagine; by host glycan is linked to Asn893. A disulfide bridge links Cys894 with Cys905. Residues Gln970–Phe1020 are heptad repeat 1. A coiled-coil region spans residues Gln999–Ile1043. 5 N-linked (GlcNAc...) asparagine; by host glycosylation sites follow: Asn1180, Asn1190, Asn1209, Asn1225, and Asn1246. Residues Ala1214–Glu1254 form a heptad repeat 2 region. A coiled-coil region spans residues Thr1227–Val1255. A helical transmembrane segment spans residues Trp1266–Ile1286. Over Cys1287–Asp1324 the chain is Cytoplasmic. Residues Ser1320–Asp1324 carry the KxHxx motif.

This sequence belongs to the betacoronaviruses spike protein family. In terms of assembly, homotrimer; each monomer consists of a S1 and a S2 subunit. The resulting peplomers protrude from the virus surface as spikes. Cytoplasmic tail interacts with M protein. S1 interacts with murine CEACAM1, and weakly with murine CEACAM2 in tissue culture. Post-translationally, specific enzymatic cleavages in vivo yield mature proteins. The precursor is processed into S1 and S2 by host cell furin or another cellular protease to yield the mature S1 and S2 proteins. Additionally, a second cleavage leads to the release of a fusion peptide after viral attachment to host cell receptor. In terms of processing, the cytoplasmic Cys-rich domain is palmitoylated. Spike glycoprotein is digested within host endosomes.

The protein resides in the virion membrane. It is found in the host endoplasmic reticulum-Golgi intermediate compartment membrane. It localises to the host cell membrane. Its function is as follows. Attaches the virion to the cell membrane by interacting with host receptor, initiating the infection. Interacts with murine CEACAM1 to mediate viral entry. In terms of biological role, mediates fusion of the virion and cellular membranes by acting as a class I viral fusion protein. Under the current model, the protein has at least three conformational states: pre-fusion native state, pre-hairpin intermediate state, and post-fusion hairpin state. During viral and target cell membrane fusion, the coiled coil regions (heptad repeats) assume a trimer-of-hairpins structure, positioning the fusion peptide in close proximity to the C-terminal region of the ectodomain. The formation of this structure appears to drive apposition and subsequent fusion of viral and target cell membranes. Acts as a viral fusion peptide which is unmasked following S2 cleavage occurring upon virus endocytosis. The chain is Spike glycoprotein from Murine coronavirus (strain A59) (MHV-A59).